Reading from the N-terminus, the 379-residue chain is tRNA (guanine(26)-N(2))-dimethyltransferase (379 aa).

In terms of domain architecture, Trm1 methyltransferase spans 4–375 (VEVLEGKAKI…APYEVFVNVL (372 aa)). 5 residues coordinate S-adenosyl-L-methionine: Arg-36, Arg-61, Asp-78, Asp-120, and Ala-121.

It belongs to the class I-like SAM-binding methyltransferase superfamily. Trm1 family.

It carries out the reaction guanosine(26) in tRNA + 2 S-adenosyl-L-methionine = N(2)-dimethylguanosine(26) in tRNA + 2 S-adenosyl-L-homocysteine + 2 H(+). In terms of biological role, dimethylates a single guanine residue at position 26 of a number of tRNAs using S-adenosyl-L-methionine as donor of the methyl groups. The chain is tRNA (guanine(26)-N(2))-dimethyltransferase from Pyrococcus abyssi (strain GE5 / Orsay).